The sequence spans 749 residues: Small G protein signaling modulator 3 (749 aa).

In terms of domain architecture, Rab-GAP TBC spans 114 to 305 (GIPHGMRPQL…RIWDLFFYEG (192 aa)). Serine 406 carries the phosphoserine modification. Residues 415 to 439 (EDDLEALKAKNIKQTELVADLREAI) are a coiled coil. The region spanning 480–539 (SHRRRAKALLDFERHDDDELGFRKNDIITIVSQKDEHCWVGELNGLRGWFPAKFVEVLDE) is the SH3 domain. One can recognise an RUN domain in the interval 555 to 718 (GVTDLVRGTL…FAFSLSQDWE (164 aa)).

It belongs to the small G protein signaling modulator family. As to quaternary structure, interacts with GJA1. Interaction with GJA1 induces its degradation. Interacts via its RUN domain with the C-terminal region of NF2. Interacts with RAB3A, RAB4A, RAB5A, RAB8A, RAB11A, RAP1A, RAP1B, RAP2A, RAP2B and PDCD6IP. No interaction with RAB27A. Widely expressed.

Its subcellular location is the cytoplasm. Its function is as follows. May play a cooperative role in NF2-mediated growth suppression of cells. This chain is Small G protein signaling modulator 3, found in Homo sapiens (Human).